Reading from the N-terminus, the 393-residue chain is ATP phosphoribosyltransferase regulatory subunit (393 aa).

The protein belongs to the class-II aminoacyl-tRNA synthetase family. HisZ subfamily. Heteromultimer composed of HisG and HisZ subunits.

The protein localises to the cytoplasm. Its pathway is amino-acid biosynthesis; L-histidine biosynthesis; L-histidine from 5-phospho-alpha-D-ribose 1-diphosphate: step 1/9. Its function is as follows. Required for the first step of histidine biosynthesis. May allow the feedback regulation of ATP phosphoribosyltransferase activity by histidine. This Chromohalobacter salexigens (strain ATCC BAA-138 / DSM 3043 / CIP 106854 / NCIMB 13768 / 1H11) protein is ATP phosphoribosyltransferase regulatory subunit.